A 346-amino-acid polypeptide reads, in one-letter code: fMet-Leu-Phe receptor (346 aa).

N-linked (GlcNAc...) asparagine glycosylation is found at asparagine 1 and asparagine 7. Over 1–24 (NSSLPTNISGGTPAVSAGYLFLDI) the chain is Extracellular. A helical transmembrane segment spans residues 25-47 (ITYLVYAVTFVLGVLGNGLVIWV). The Cytoplasmic portion of the chain corresponds to 48 to 58 (AGFRMTHTVTT). A helical membrane pass occupies residues 59–80 (ISYLNLAVADFCFTSTLPFFMV). Topologically, residues 81–97 (RKAMGGHWPFGWFLCKF) are extracellular. A disulfide bridge connects residues cysteine 95 and cysteine 173. A helical transmembrane segment spans residues 98–118 (IFTIVDINLFGSVFLIALIAL). Residues 119–137 (DRCVCVLHPVWTQNHRTVS) lie on the Cytoplasmic side of the membrane. A helical transmembrane segment spans residues 138 to 159 (LAKKVIIGPWVMALLLTLPVII). Topologically, residues 160–202 (RVTTVPGKMGTVSCTFNFSPWTNDPKERIKVAIAMLTVRGIIR) are extracellular. The helical transmembrane segment at 203–223 (FIIGFSAPMSIVAVSYGLIAT) threads the bilayer. The Cytoplasmic portion of the chain corresponds to 224–239 (KIHKQGLIKSSRPLRV). Residues 240 to 263 (LSFVAAAFFLCWSPYQVVAFIATV) traverse the membrane as a helical segment. Residues 264 to 282 (RIRELLQGMYKEISIAVDV) lie on the Extracellular side of the membrane. Residues 283-302 (TSALAFFNSCLNPMLYVFMG) form a helical membrane-spanning segment. At 303 to 346 (QDFRERLIHSLPASLERALTEASTQTSDTATNSTLPSAEVALQA) the chain is on the cytoplasmic side. The span at 324 to 338 (ASTQTSDTATNSTLP) shows a compositional bias: polar residues. The segment at 324–346 (ASTQTSDTATNSTLPSAEVALQA) is disordered.

Belongs to the G-protein coupled receptor 1 family. Phosphorylated; which is necessary for desensitization.

Its subcellular location is the cell membrane. High affinity receptor for N-formyl-methionyl peptides (fMLP), which are powerful neutrophil chemotactic factors. Binding of fMLP to the receptor stimulates intracellular calcium mobilization and superoxide anion release. This response is mediated via a G-protein that activates a phosphatidylinositol-calcium second messenger system. Receptor for TAFA4, mediates its effects on chemoattracting macrophages, promoting phagocytosis and increasing ROS release. Receptor for cathepsin CTSG, leading to increased phagocyte chemotaxis. This is fMet-Leu-Phe receptor (FPR1) from Pongo pygmaeus (Bornean orangutan).